A 408-amino-acid polypeptide reads, in one-letter code: Arginine biosynthesis bifunctional protein ArgJ (408 aa).

Threonine 156, lysine 182, threonine 193, glutamate 279, asparagine 403, and serine 408 together coordinate substrate. Catalysis depends on threonine 193, which acts as the Nucleophile.

It belongs to the ArgJ family. Heterotetramer of two alpha and two beta chains.

It is found in the cytoplasm. It catalyses the reaction N(2)-acetyl-L-ornithine + L-glutamate = N-acetyl-L-glutamate + L-ornithine. The enzyme catalyses L-glutamate + acetyl-CoA = N-acetyl-L-glutamate + CoA + H(+). Its pathway is amino-acid biosynthesis; L-arginine biosynthesis; L-ornithine and N-acetyl-L-glutamate from L-glutamate and N(2)-acetyl-L-ornithine (cyclic): step 1/1. The protein operates within amino-acid biosynthesis; L-arginine biosynthesis; N(2)-acetyl-L-ornithine from L-glutamate: step 1/4. Functionally, catalyzes two activities which are involved in the cyclic version of arginine biosynthesis: the synthesis of N-acetylglutamate from glutamate and acetyl-CoA as the acetyl donor, and of ornithine by transacetylation between N(2)-acetylornithine and glutamate. This Bordetella pertussis (strain Tohama I / ATCC BAA-589 / NCTC 13251) protein is Arginine biosynthesis bifunctional protein ArgJ.